We begin with the raw amino-acid sequence, 359 residues long: Probable isoaspartyl peptidase/L-asparaginase 3 (359 aa).

The Nucleophile role is filled by threonine 224. Substrate contacts are provided by residues 252–255 (RVGD) and 275–278 (TGDG).

It belongs to the Ntn-hydrolase family. In terms of assembly, heterotetramer of two alpha and two beta chains arranged as a dimer of alpha/beta heterodimers. Post-translationally, cleaved into an alpha and beta chain by autocatalysis; this activates the enzyme. The N-terminal residue of the beta subunit is responsible for the nucleophile hydrolase activity.

It catalyses the reaction Cleavage of a beta-linked Asp residue from the N-terminus of a polypeptide.. In terms of biological role, acts in asparagine catabolism but also in the final steps of protein degradation via hydrolysis of a range of isoaspartyl dipeptides. This Arabidopsis thaliana (Mouse-ear cress) protein is Probable isoaspartyl peptidase/L-asparaginase 3.